The sequence spans 68 residues: Serine rich endogenous peptide 13 (68 aa).

A signal peptide spans Met-1 to Ala-31. The interval Arg-33–Pro-68 is disordered. Basic and acidic residues predominate over residues Gln-37–Tyr-47. The span at Pro-48 to Leu-57 shows a compositional bias: pro residues. The SCOOP motif motif lies at Pro-54 to Pro-68. The SxS motif essential for MIK2 binding motif lies at Ser-60–Ser-62.

The protein belongs to the serine rich endogenous peptide (SCOOP) phytocytokine family. In terms of assembly, interacts with MIK2 (via extracellular leucine-rich repeat domain); this interaction triggers the formation of complex between MIK2 and the BAK1/SERK3 and SERK4 coreceptors, and subsequent BAK1 activation by phosphorylation. In terms of tissue distribution, mostly expressed in stems and flowers and, to a lower extent, in seedlings shoots, roots, siliques, seeds and leaves.

The protein localises to the cell membrane. Its subcellular location is the secreted. It localises to the extracellular space. The protein resides in the apoplast. Brassicaceae-specific phytocytokine (plant endogenous peptide released into the apoplast) perceived by MIK2 in a BAK1/SERK3 and SERK4 coreceptors-dependent manner, that modulates various physiological and antimicrobial processes including growth prevention and reactive oxygen species (ROS) response regulation. Promotes the expression of immune-related marker genes (e.g. WRKY30, WRKY33 and CYP81F2) in a MIK2-dependent manner. Inhibits root growth and regulates root meristems. Prevents general growth and development. Exhibits antibacterial effects against Pseudomonas syringae pv. tomato DC3000, Ralstonia solanacearum, Bacillus subtilis and Agrobacterium tumefaciens, thus being an antimicrobial peptide (AMP). This chain is Serine rich endogenous peptide 13, found in Arabidopsis thaliana (Mouse-ear cress).